The following is a 613-amino-acid chain: UvrABC system protein C (613 aa).

The GIY-YIG domain maps to D13–I92. In terms of domain architecture, UVR spans D204 to L239.

Belongs to the UvrC family. Interacts with UvrB in an incision complex.

It localises to the cytoplasm. Functionally, the UvrABC repair system catalyzes the recognition and processing of DNA lesions. UvrC both incises the 5' and 3' sides of the lesion. The N-terminal half is responsible for the 3' incision and the C-terminal half is responsible for the 5' incision. The protein is UvrABC system protein C of Ruminiclostridium cellulolyticum (strain ATCC 35319 / DSM 5812 / JCM 6584 / H10) (Clostridium cellulolyticum).